A 1378-amino-acid chain; its full sequence is Attractin-like protein 1 (1378 aa).

A signal peptide spans 1–51 (MEPGVRARSGAPQPASPVLWRARPAGGGGASSWLLLDGNSWLLCYGFLYLA). Positions 52-90 (LYAQVSQSKPCERTGSCFSGRCVNSTCLCDPGWVGDQCQ) constitute an EGF-like 1 domain. Residues 52 to 1229 (LYAQVSQSKP…FSQHNTIMDL (1178 aa)) lie on the Extracellular side of the membrane. Intrachain disulfides connect cysteine 62-cysteine 78, cysteine 80-cysteine 89, and cysteine 92-cysteine 118. N-linked (GlcNAc...) asparagine glycosylation is present at asparagine 75. The region spanning 92–208 (CQGRFKLTEP…TGFNIFYSIN (117 aa)) is the CUB domain. Asparagine 173 and asparagine 197 each carry an N-linked (GlcNAc...) asparagine glycan. In terms of domain architecture, EGF-like 2 spans 206–244 (SINSCPNNCSGHGKCTTSVSVASQVYCECDKYWKGEACD). 3 disulfide bridges follow: cysteine 210–cysteine 220, cysteine 214–cysteine 232, and cysteine 234–cysteine 243. 6 Kelch repeats span residues 315–364 (FMWV…LYQE), 366–414 (IFMY…EGHS), 426–474 (VMIV…SVYD), 479–530 (SIYV…LING), 532–590 (MLIF…VING), and 591–637 (SMYI…WNKN). Asparagine 379 carries an N-linked (GlcNAc...) asparagine glycan. 3 consecutive PSI domains span residues 613–656 (NCKA…AKCP), 665–708 (RCYR…TKCH), and 714–759 (ICNK…DACL). The N-linked (GlcNAc...) asparagine glycan is linked to asparagine 703. The 119-residue stretch at 754–872 (VGDACLRINS…TSMADGLVCE (119 aa)) folds into the C-type lectin domain. A disulfide bridge links cysteine 775 with cysteine 871. Asparagine 777 and asparagine 897 each carry an N-linked (GlcNAc...) asparagine glycan. 2 PSI domains span residues 888 to 938 (PCSL…ATCS) and 941 to 1011 (NCSG…IQCP). 8 disulfide bridges follow: cysteine 1013–cysteine 1021, cysteine 1015–cysteine 1027, cysteine 1030–cysteine 1039, cysteine 1042–cysteine 1056, cysteine 1059–cysteine 1068, cysteine 1061–cysteine 1075, cysteine 1077–cysteine 1087, and cysteine 1090–cysteine 1105. 2 consecutive Laminin EGF-like domains span residues 1013–1058 (CQCN…QCTA) and 1059–1107 (CTCG…TCYY). A glycan (N-linked (GlcNAc...) asparagine) is linked at asparagine 1156. Residues 1230–1250 (VQFFVTFFSCFLSLLLVAAVV) traverse the membrane as a helical segment. Topologically, residues 1251–1378 (WKIKQTCWAS…HLSTRQGTCV (128 aa)) are cytoplasmic. Residues 1287–1324 (VGAEQTDFLRGPLEGAPKPIAIEPCAGNRAAVLTVFLC) form an interaction with MC4R region. Positions 1351-1378 (QQKPSDNKDKTSGVRNRKHLSTRQGTCV) are disordered.

As to quaternary structure, interacts with MC4R. Highly expressed in brain, heart, lung, kidney and liver. In the central nervous system, it is highly expressed in the dentate gyrus, CA1-3 regions of the hippocampus, and the ventral taenia tecta.

The protein resides in the cell membrane. Functionally, may play a role in melanocortin signaling pathways that regulate energy homeostasis. The protein is Attractin-like protein 1 (Atrnl1) of Mus musculus (Mouse).